A 621-amino-acid polypeptide reads, in one-letter code: MIEKLTFGLFKKEDARSFMRLMAYVRPYKIRIVAALIAIFGVAATESYLAAFIAPLINHGFSAPAAPPELSAAAGIISTLQNWREQFTYMVWGTENKIWTVPLFLIILVVIRGICRFTSTYLMTWVSVMTISKIRKDMFAKMLTLSSRYHQETPSGTVLMNMLNLTEQSVSNASDIFTVLTRDTMIVTGLTIVLLYLNWQLSLIVVLMFPLLSLLSRYYRDRLKHVISDSQKSIGTMNNVIAETHQGHRVVKLFNGQAQAANRFDAVNRTIVRLSKKITQATAAHSPFSELIASIALAVVIFIALWQSQNGYTTIGEFMAFIVAMLQMYAPIKSLANISIPMQTMFLAADGVCAFLDTPPEQDKGTLAPQRVEGRISFRNVDVEYRSDGIKALDNFNLDIRQGERVALVGRSGSGKSTVVNLLPRFVEPSAGNICIDGIDIADIKLDCLRAQFALVSQDVFLFDDTLFENVRYSRPDAGEAEVLFALQTANLQSLIDSSPLGLHQPIGSNGSNLSGGQRQRVAIARAILKDAPILLLDEATSALDNESERLVQQALERLMENRTGIIVAHRLTTIEGADRIIVMDDGKIIEQGTHEQLMSQNGYYTMLRNISNKDAAVRTA.

The next 5 membrane-spanning stretches (helical) occupy residues 32-52 (IVAALIAIFGVAATESYLAAF), 91-111 (VWGTENKIWTVPLFLIILVVI), 192-212 (IVLLYLNWQLSLIVVLMFPLL), 286-306 (SPFSELIASIALAVVIFIALW), and 312-332 (YTTIGEFMAFIVAMLQMYAPI). The ABC transmembrane type-1 domain maps to 33–344 (VAALIAIFGV…LANISIPMQT (312 aa)). Positions 378-611 (FRNVDVEYRS…NGYYTMLRNI (234 aa)) constitute an ABC transporter domain. 410 to 417 (GRSGSGKS) contributes to the ATP binding site.

The protein belongs to the ABC transporter superfamily. Lipid exporter (TC 3.A.1.106) family. Homodimer.

Its subcellular location is the cell inner membrane. It catalyses the reaction ATP + H2O + lipid A-core oligosaccharideSide 1 = ADP + phosphate + lipid A-core oligosaccharideSide 2.. In terms of biological role, involved in lipopolysaccharide (LPS) biosynthesis. Translocates lipid A-core from the inner to the outer leaflet of the inner membrane. Transmembrane domains (TMD) form a pore in the inner membrane and the ATP-binding domain (NBD) is responsible for energy generation. The chain is ATP-dependent lipid A-core flippase from Neisseria meningitidis serogroup B (strain ATCC BAA-335 / MC58).